Consider the following 206-residue polypeptide: Probable GTP-binding protein EngB (206 aa).

The region spanning 29 to 201 (ILPEVAVVGR…MIMIQDALND (173 aa)) is the EngB-type G domain. GTP is bound by residues 37–44 (GRSNVGKS), 64–68 (GKTQA), 82–85 (DLPG), 149–152 (TKID), and 180–182 (YSV). Residues Ser44 and Thr66 each contribute to the Mg(2+) site.

Belongs to the TRAFAC class TrmE-Era-EngA-EngB-Septin-like GTPase superfamily. EngB GTPase family. Mg(2+) serves as cofactor.

Functionally, necessary for normal cell division and for the maintenance of normal septation. This chain is Probable GTP-binding protein EngB, found in Protochlamydia amoebophila (strain UWE25).